Consider the following 262-residue polypeptide: Acyl-[acyl-carrier-protein]--UDP-N-acetylglucosamine O-acyltransferase (262 aa).

This sequence belongs to the transferase hexapeptide repeat family. LpxA subfamily. Homotrimer.

It is found in the cytoplasm. It catalyses the reaction a (3R)-hydroxyacyl-[ACP] + UDP-N-acetyl-alpha-D-glucosamine = a UDP-3-O-[(3R)-3-hydroxyacyl]-N-acetyl-alpha-D-glucosamine + holo-[ACP]. It participates in glycolipid biosynthesis; lipid IV(A) biosynthesis; lipid IV(A) from (3R)-3-hydroxytetradecanoyl-[acyl-carrier-protein] and UDP-N-acetyl-alpha-D-glucosamine: step 1/6. In terms of biological role, involved in the biosynthesis of lipid A, a phosphorylated glycolipid that anchors the lipopolysaccharide to the outer membrane of the cell. This Salmonella dublin (strain CT_02021853) protein is Acyl-[acyl-carrier-protein]--UDP-N-acetylglucosamine O-acyltransferase.